A 352-amino-acid polypeptide reads, in one-letter code: tRNA-specific 2-thiouridylase MnmA (352 aa).

Residues 7-14 (GLSGGVDS) and Leu-33 contribute to the ATP site. Residue Cys-94 is the Nucleophile of the active site. A disulfide bridge connects residues Cys-94 and Cys-193. Gly-119 is an ATP binding site. The interval 143–145 (KDQ) is interaction with tRNA. The active-site Cysteine persulfide intermediate is the Cys-193. An interaction with tRNA region spans residues 298 to 299 (RY).

This sequence belongs to the MnmA/TRMU family.

It localises to the cytoplasm. The enzyme catalyses S-sulfanyl-L-cysteinyl-[protein] + uridine(34) in tRNA + AH2 + ATP = 2-thiouridine(34) in tRNA + L-cysteinyl-[protein] + A + AMP + diphosphate + H(+). In terms of biological role, catalyzes the 2-thiolation of uridine at the wobble position (U34) of tRNA, leading to the formation of s(2)U34. This is tRNA-specific 2-thiouridylase MnmA from Microcystis aeruginosa (strain NIES-843 / IAM M-2473).